Consider the following 494-residue polypeptide: Gram-negative bacteria-binding protein 1 (494 aa).

The N-terminal stretch at 1-19 (MPGLCIGILLLIGFGCTTA) is a signal peptide. The region spanning 20 to 120 (YKIPTPTVEL…QPLPVCNLGG (101 aa)) is the CBM39 domain. 2 N-linked (GlcNAc...) asparagine glycosylation sites follow: N56 and N81. The interval 126 to 160 (GCSPGDDDFTDDNQLSTEDSALEPTAPSVCEPSES) is disordered. Positions 135-494 (TDDNQLSTED…DYVRVFATDN (360 aa)) constitute a GH16 domain. Residue N185 is glycosylated (N-linked (GlcNAc...) asparagine).

The protein belongs to the insect beta-1,3-glucan binding protein family.

Its subcellular location is the cell membrane. In terms of biological role, plays a key role in innate immunity by acting as a pattern recognition receptor for beta-1,3-glucan from fungi and lipopolysaccharide from Gram-negative bacteria. Upon recognition of invading microorganism-derived products, acts upstream of protease spz processing enzyme SPE to activate the Toll pathway and to induce the expression of antimicrobial peptides drosomycin, cecropin and attacin. In Drosophila melanogaster (Fruit fly), this protein is Gram-negative bacteria-binding protein 1.